The sequence spans 485 residues: Adenosylhomocysteinase (485 aa).

3 residues coordinate substrate: threonine 64, aspartate 139, and glutamate 205. 206–208 contributes to the NAD(+) binding site; sequence TTT. Residues lysine 235 and aspartate 239 each coordinate substrate. NAD(+) is bound by residues asparagine 240, 269 to 274, glutamate 292, asparagine 327, 348 to 350, and asparagine 397; these read GYGDVG and IGH.

It belongs to the adenosylhomocysteinase family. Homotetramer. The cofactor is NAD(+).

The enzyme catalyses S-adenosyl-L-homocysteine + H2O = L-homocysteine + adenosine. It participates in amino-acid biosynthesis; L-homocysteine biosynthesis; L-homocysteine from S-adenosyl-L-homocysteine: step 1/1. Adenosylhomocysteine is a competitive inhibitor of S-adenosyl-L-methionine-dependent methyl transferase reactions; therefore adenosylhomocysteinase may play a key role in the control of methylations via regulation of the intracellular concentration of adenosylhomocysteine. The protein is Adenosylhomocysteinase (SAHH) of Triticum aestivum (Wheat).